A 390-amino-acid chain; its full sequence is DNA polymerase IV (390 aa).

Positions 6–187 (VMHVDLDAFF…LDIAVMPGIG (182 aa)) constitute a UmuC domain. Residues Asp-10 and Asp-105 each contribute to the Mg(2+) site. Glu-106 is an active-site residue.

It belongs to the DNA polymerase type-Y family. Monomer. The cofactor is Mg(2+).

The protein localises to the cytoplasm. It catalyses the reaction DNA(n) + a 2'-deoxyribonucleoside 5'-triphosphate = DNA(n+1) + diphosphate. Functionally, poorly processive, error-prone DNA polymerase involved in untargeted mutagenesis. Copies undamaged DNA at stalled replication forks, which arise in vivo from mismatched or misaligned primer ends. These misaligned primers can be extended by PolIV. Exhibits no 3'-5' exonuclease (proofreading) activity. May be involved in translesional synthesis, in conjunction with the beta clamp from PolIII. The sequence is that of DNA polymerase IV from Dehalococcoides mccartyi (strain ATCC BAA-2100 / JCM 16839 / KCTC 5957 / BAV1).